The chain runs to 682 residues: Methionine--tRNA ligase (682 aa).

The 'HIGH' region signature appears at 14-24; it reads PYANGSIHLGH. Residues C145, C148, C158, and C161 each contribute to the Zn(2+) site. A 'KMSKS' region motif is present at residues 331-335; sequence KMSKS. Residue K334 participates in ATP binding. A tRNA-binding domain is found at 580-682; it reads AFAAVDLRVA…SGAKPGQRIK (103 aa).

It belongs to the class-I aminoacyl-tRNA synthetase family. MetG type 1 subfamily. As to quaternary structure, homodimer. Zn(2+) is required as a cofactor.

It localises to the cytoplasm. It carries out the reaction tRNA(Met) + L-methionine + ATP = L-methionyl-tRNA(Met) + AMP + diphosphate. Functionally, is required not only for elongation of protein synthesis but also for the initiation of all mRNA translation through initiator tRNA(fMet) aminoacylation. The protein is Methionine--tRNA ligase of Pseudomonas savastanoi pv. phaseolicola (strain 1448A / Race 6) (Pseudomonas syringae pv. phaseolicola (strain 1448A / Race 6)).